A 304-amino-acid chain; its full sequence is GS homeobox 2 (304 aa).

Residues 116–151 (AQFCPRVNHAHHHHHPPQHHHHHHQPQQPGSAAAAA) form a disordered region. The span at 123–140 (NHAHHHHHPPQHHHHHHQ) shows a compositional bias: basic residues. The span at 141-151 (PQQPGSAAAAA) shows a compositional bias: low complexity. Residues 202–261 (GKRMRTAFTSTQLLELEREFSSNMYLSRLRRIEIATYLNLSEKQVKIWFQNRRVKHKKEG) constitute a DNA-binding region (homeobox). The tract at residues 283–304 (RSEDEDSLSPASANDDKEISPL) is disordered.

This sequence belongs to the Antp homeobox family.

The protein resides in the nucleus. Its subcellular location is the cytoplasm. Transcription factor that binds 5'-CNAATTAG-3' DNA sequence and regulates the expression of numerous genes including genes important for brain development. During telencephalic development, causes ventralization of pallial progenitors and, depending on the developmental stage, specifies different neuronal fates. At early stages, necessary and sufficient to correctly specify the ventral lateral ganglionic eminence (LGE) and its major derivatives, the striatal projection neurons. At later stages, may specify LGE progenitors toward dorsal LGE fates, including olfactory bulb interneurons. The polypeptide is GS homeobox 2 (GSX2) (Homo sapiens (Human)).